The primary structure comprises 7078 residues: MSFVAGVTAQGARGTYRAALNSEKHQDHVSLTVPLCGSGNLVEKLSPWFMDGENAYEVVKAMLLKKEPLLYVPIRLAGHTRHLPGPRVYLVERLIACENPFMVNQLAYSSSANGSLVGTTLQGKPIGMFFPYDIELVTGKQNILLRKYGRGGYHYTPFHYERDNTSCPEWMDDFEADPKGKYAQNLLKKLIGGDVTPVDQYMCGVDGKPISAYAFLMAKDGITKLADVEADVAARADDEGFITLKNNLYRLVWHVERKDVPYPKQSIFTINSVVQKDGVENTPPHYFTLGCKILTLTPRNKWSGVSDLSLKQKLLYTFYGKESLENPTYIYHSAFIECGSCGNDSWLTGNAIQGFACGCGASYTANDVEVQSSGMIKPNALLCATCPFAKGDSCSSNCKHSVAQLVSYLSERCNVIADSKSFTLIFGGVAYAYFGCEEGTMYFVPRAKSVVSRIGDSIFTGCTGSWNKVTQIANMFLEQTQHSLNFVGEFVVNDVVLAILSGTTTNVDKIRQLLKGVTLDKLRDYLADYDVAVTAGPFMDNAINVGGTGLQYAAITAPYVVLTGLGESFKKVATIPYKVCNSVKDTLTYYAHSVLYRVFPYDMDSGVSSFSELLFDCVDLSVASTYFLVRLLQDKTGDFMSTIITSCQTAVSKLLDTCFEATEATFNFLLDLAGLFRIFLRNAYVYTSQGFVVVNGKVSTLVKQVLDLLNKGMQLLHTKVSWAGSNISAVIYSGRESLIFPSGTYYCVTTKAKSVQQDLDVILPGEFSKKQLGLLQPTDNSTTVSVTVSSNMVETVVGQLEQTNMHSPDVIVGDYVIISEKLFVRSKEEDGFAFYPACTNGHAVPTLFRLKGGAPVKKVAFGGDQVHEVAAVRSVTVEYNIHAVLDTLLASSSLRTFVVDKSLSIEEFADVVKEQVSDLLVKLLRGMPIPDFDLDDFIDAPCYCFNAEGDASWSSTMIFSLHPVECDEECSEVEASDLEEGESECISETSTEQVDVSHEISDDEWAAAVDEAFPLDEAEDVTESVQEEAQPVEVPVEDIAQVVIADTLQETPVVSDTVEVPPQVVKLPSEPQTIQPEVKEVAPVYEADTEQTQSVTVKPKRLRKKRNVDPLSNFEHKVITECVTIVLGDAIQVAKCYGESVLVNAANTHLKHGGGIAGAINAASKGAVQKESDEYILAKGPLQVGDSVLLQGHSLAKNILHVVGPDARAKQDVSLLSKCYKAMNAYPLVVTPLVSAGIFGVKPAVSFDYLIREAKTRVLVVVNSQDVYKSLTIVDIPQSLTFSYDGLRGAIRKAKDYGFTVFVCTDNSANTKVLRNKGVDYTKKFLTVDGVQYYCYTSKDTLDDILQQANKSVGIISMPLGYVSHGLDLIQAGSVVRRVNVPYVCLLANKEQEAILMSEDVKLNPSEDFIKHVRTNGGYNSWHLVEGELLVQDLRLNKLLHWSDQTICYKDSVFYVVKNSTAFPFETLSACRAYLDSRTTQQLTIEVLVTVDGVNFRTVVLNNKNTYRSQLGCVFFNGADISDTIPDEKQNGHSLYLADNLTADETKALKELYGPVDPTFLHRFYSLKAAVHKWKMVVCDKVRSLKLSDNNCYLNAVIMTLDLLKDIKFVIPALQHAFMKHKGGDSTDFIALIMAYGNCTFGAPDDASRLLHTVLAKAELCCSARMVWREWCNVCGIKDVVLQGLKACCYVGVQTVEDLRARMTYVCQCGGERHRQIVEHTTPWLLLSGTPNEKLVTTSTAPDFVAFNVFQGIETAVGHYVHARLKGGLILKFDSGTVSKTSDWKCKVTDVLFPGQKYSSDCNVVRYSLDGNFRTEVDPDLSAFYVKDGKYFTSEPPVTYSPATILAGSVYTNSCLVSSDGQPGGDAISLSFNNLLGFDSSKPVTKKYTYSFLPKEDGDVLLAEFDTYDPIYKNGAMYKGKPILWVNKASYDTNLNKFNRASLRQIFDVAPIELENKFTPLSVESTPVEPPTVDVVALQQEMTIVKCKGLNKPFVKDNVSFVADDSGTPVVEYLSKEDLHTLYVDPKYQVIVLKDNVLSSMLRLHTVESGDINVVAASGSLTRKVKLLFRASFYFKEFATRTFTATTAVGSCIKSVVRHLGVTKGILTGCFSFVKMLFMLPLAYFSDSKLGTTEVKVSALKTAGVVTGNVVKQCCTAAVDLSMDKLRRVDWKSTLRLLLMLCTTMVLLSSVYHLYVFNQVLSSDVMFEDAQGLKKFYKEVRAYLGISSACDGLASAYRANSFDVPTFCANRSAMCNWCLISQDSITHYPALKMVQTHLSHYVLNIDWLWFAFETGLAYMLYTSAFNWLLLAGTLHYFFAQTSIFVDWRSYNYAVSSAFWLFTHIPMAGLVRMYNLLACLWLLRKFYQHVINGCKDTACLLCYKRNRLTRVEASTVVCGGKRTFYITANGGISFCRRHNWNCVDCDTAGVGNTFICEEVANDLTTALRRPINATDRSHYYVDSVTVKETVVQFNYRRDGQPFYERFPLCAFTNLDKLKFKEVCKTTTGIPEYNFIIYDSSDRGQESLARSACVYYSQVLCKSILLVDSSLVTSVGDSSEIATKMFDSFVNSFVSLYNVTRDKLEKLISTARDGVRRGDNFHSVLTTFIDAARGPAGVESDVETNEIVDSVQYAHKHDIQITNESYNNYVPSYVKPDSVSTSDLGSLIDCNAASVNQIVLRNSNGACIWNAAAYMKLSDALKRQIRIACRKCNLAFRLTTSKLRANDNILSVRFTANKIVGGAPTWFNALRDFTLKGYVLATIIVFLCAVLMYLCLPTFSMVPVEFYEDRILDFKVLDNGIIRDVNPDDKCFANKHRSFTQWYHEHVGGVYDNSITCPLTVAVIAGVAGARIPDVPTTLAWVNNQIIFFVSRVFANTGSVCYTPIDEIPYKSFSDSGCILPSECTMFRDAEGRMTPYCHDPTVLPGAFAYSQMRPHVRYDLYDGNMFIKFPEVVFESTLRITRTLSTQYCRFGSCEYAQEGVCITTNGSWAIFNDHHLNRPGVYCGSDFIDIVRRLAVSLFQPITYFQLTTSLVLGIGLCAFLTLLFYYINKVKRAFADYTQCAVIAVVAAVLNSLCICFVASIPLCIVPYTALYYYATFYFTNEPAFIMHVSWYIMFGPIVPIWMTCVYTVAMCFRHFFWVLAYFSKKHVEVFTDGKLNCSFQDAASNIFVINKDTYAALRNSLTNDAYSRFLGLFNKYKYFSGAMETAAYREAAACHLAKALQTYSETGSDLLYQPPNCSITSGVLQSGLVKMSHPSGDVEACMVQVTCGSMTLNGLWLDNTVWCPRHVMCPADQLSDPNYDALLISMTNHSFSVQKHIGAPANLRVVGHAMQGTLLKLTVDVANPSTPAYTFTTVKPGAAFSVLACYNGRPTGTFTVVMRPNYTIKGSFLCGSCGSVGYTKEGSVINFCYMHQMELANGTHTGSAFDGTMYGAFMDKQVHQVQLTDKYCSVNVVAWLYAAILNGCAWFVKPNRTSVVSFNEWALANQFTEFVGTQSVDMLAVKTGVAIEQLLYAIQQLYTGFQGKQILGSTMLEDEFTPEDVNMQIMGVVMQSGVRKVTYGTAHWLFATLVSTYVIILQATKFTLWNYLFETIPTQLFPLLFVTMAFVMLLVKHKHTFLTLFLLPVAICLTYANIVYEPTTPISSALIAVANWLAPTNAYMRTTHTDIGVYISMSLVLVIVVKRLYNPSLSNFALALCSGVMWLYTYSIGEASSPIAYLVFVTTLTSDYTITVFVTVNLAKVCTYAIFAYSPQLTLVFPEVKMILLLYTCLGFMCTCYFGVFSLLNLKLRAPMGVYDFKVSTQEFRFMTANNLTAPRNSWEAMALNFKLIGIGGTPCIKVAAMQSKLTDLKCTSVVLLSVLQQLHLEANSRAWAFCVKCHNDILAATDPSEAFEKFVSLFATLMTFSGNVDLDALASDIFDTPSVLQATLSEFSHLATFAELEAAQKAYQEAMDSGDTSPQVLKALQKAVNIAKNAYEKDKAVARKLERMADQAMTSMYKQARAEDKKAKIVSAMQTMLFGMIKKLDNDVLNGIISNARNGCIPLSVIPLCASNKLRVVIPDFTVWNQVVTYPSLNYAGALWDITVINNVDNEIVKSSDVVDSNENLTWPLVLECTRASTSAVKLQNNEIKPSGLKTMVVSAGQEQTNCNTSSLAYYEPVQGRKMLMALLSDNAYLKWARVEGKDGFVSVELQPPCKFLIAGPKGPEIRYLYFVKNLNNLHRGQVLGHIAATVRLQAGSNTEFASNSSVLSLVNFTVDPQKAYLDFVNAGGAPLTNCVKMLTPKTGTGIAISVKPESTADQETYGGASVCLYCRAHIEHPDVSGVCKYKGKFVQIPAQCVRDPVGFCLSNTPCNVCQYWIGYGCNCDSLRQAALPQSKDSNFLKRVRGSIVNARIEPCSSGLSTDVVFRAFDICNYKAKVAGIGKYYKTNTCRFVELDDQGHHLDSYFVVKRHTMENYELEKHCYDLLRDCDAVAPHDFFIFDVDKVKTPHIVRQRLTEYTMMDLVYALRHFDQNSEVLKAILVKYGCCDVTYFENKLWFDFVENPSVIGVYHKLGERVRQAILNTVKFCDHMVKAGLVGVLTLDNQDLNGKWYDFGDFVITQPGSGVAIVDSYYSYLMPVLSMTDCLAAETHRDCDFNKPLIEWPLTEYDFTDYKVQLFEKYFKYWDQTYHANCVNCTDDRCVLHCANFNVLFAMTMPKTCFGPIVRKIFVDGVPFVVSCGYHYKELGLVMNMDVSLHRHRLSLKELMMYAADPAMHIASSNAFLDLRTSCFSVAALTTGLTFQTVRPGNFNQDFYDFVVSKGFFKEGSSVTLKHFFFAQDGNAAITDYNYYSYNLPTMCDIKQMLFCMEVVNKYFEIYDGGCLNASEVVVNNLDKSAGHPFNKFGKARVYYESMSYQEQDELFAMTKRNVIPTMTQMNLKYAISAKNRARTVAGVSILSTMTNRQYHQKMLKSMAATRGATCVIGTTKFYGGWDFMLKTLYKDVDNPHLMGWDYPKCDRAMPNMCRIFASLILARKHGTCCTTRDRFYRLANECAQVLSEYVLCGGGYYVKPGGTSSGDATTAYANSVFNILQATTANVSALMGANGNKIVDKEVKDMQFDLYVNVYRSTSPDPKFVDKYYAFLNKHFSMMILSDDGVVCYNSDYAAKGYIAGIQNFKETLYYQNNVFMSEAKCWVETDLKKGPHEFCSQHTLYIKDGDDGYFLPYPDPSRILSAGCFVDDIVKTDGTLMVERFVSLAIDAYPLTKHEDIEYQNVFWVYLQYIEKLYKDLTGHMLDSYSVMLCGDNSAKFWEEAFYRDLYSSPTTLQAVGSCVVCHSQTSLRCGTCIRRPFLCCKCCYDHVIATPHKMVLSVSPYVCNAPGCGVSDVTKLYLGGMSYFCVDHRPVCSFPLCANGLVFGLYKNMCTGSPSIVEFNRLATCDWTESGDYTLANTTTEPLKLFAAETLRATEEASKQSYAIATIKEIVGERQLLLVWEAGKSKPPLNRNYVFTGYHITKNSKVQLGEYIFERIDYSDAVSYKSSTTYKLTVGDIFVLTSHSVATLTAPTIVNQERYVKITGLYPTITVPEEFASHVANFQKSGYSKYVTVQGPPGTGKSHFAIGLAIYYPTARVVYTACSHAAVDALCEKAFKYLNIAKCSRIIPAKARVECYDRFKVNETNSQYLFSTINALPETSADILVVDEVSMCTNYDLSIINARIKAKHIVYVGDPAQLPAPRTLLTRGTLEPENFNSVTRLMCNLGPDIFLSMCYRCPKEIVSTVSALVYNNKLLAKKELSGQCFKILYKGNVTHDASSAINRPQLTFVKNFITANPAWSKAVFISPYNSQNAVARSMLGLTTQTVDSSQGSEYQYVIFCQTADTAHANNINRFNVAITRAQKGILCVMTSQALFESLEFTELSFTNYKLQSQIVTGLFKDCSRETSGLSPAYAPTYVSVDDKYKTSDELCVNLNLPANVPYSRVISRMGFKLDATVPGYPKLFITREEAVRQVRSWIGFDVEGAHASRNACGTNVPLQLGFSTGVNFVVQPVGVVDTEWGNMLTGIAARPPPGEQFKHLVPLMHKGAAWPIVRRRIVQMLSDTLDKLSDYCTFVCWAHGFELTSASYFCKIGKEQKCCMCNRRAAAYSSPLQSYACWTHSCGYDYVYNPFFVDVQQWGYVGNLATNHDRYCSVHQGAHVASNDAIMTRCLAIHSCFIERVDWDIEYPYISHEKKLNSCCRIVERNVVRAALLAGSFDKVYDIGNPKGIPIVDDPVVDWHYFDAQPLTRKVQQLFYTEDMASRFADGLCLFWNCNVPKYPNNAIVCRFDTRVHSEFNLPGCDGGSLYVNKHAFHTPAYDVSAFRDLKPLPFFYYSTTPCEVHGNGSMIEDIDYVPLKSAVCITACNLGGAVCRKHATEYREYMEAYNLVSASGFRLWCYKTFDIYNLWSTFTKVQGLENIAFNFVKQGHFIGVEGELPVAVVNDKIFTKSGVNDICMFENKTTLPTNIAFELYAKRAVRSHPDFKLLHNLQADICYKFVLWDYERSNIYGTATIGVCKYTDIDVNSALNICFDIRDNGSLEKFMSTPNAIFISDRKIKKYPCMVGPDYAYFNGAIIRDSDVVKQPVKFYLYKKVNNEFIDPTECIYTQSRSCSDFLPLSDMEKDFLSFDSDVFIKKYGLENYAFEHVVYGDFSHTTLGGLHLLIGLYKKQQEGHIIMEEMLKGSSTIHNYFITETNTAAFKAVCSVIDLKLDDFVMILKSQDLGVVSKVVKVPIDLTMIEFMLWCKDGQVQTFYPRLQASADWKPGHAMPSLFKVQNVNLERCELANYKQSIPMPRGVHMNIAKYMQLCQYLNTCTLAVPANMRVIHFGAGSDKGIAPGTSVLRQWLPTDAIIIDNDLNEFVSDADITLFGDCVTVRVGQQVDLVISDMYDPTTKNVTGSNESKALFFTYLCNLINNNLALGGSVAIKITEHSWSVELYELMGKFAWWTVFCTNANASSSEGFLLGINYLGTIKENIDGGAMHANYIFWRNSTPMNLSTYSLFDLSKFQLKLKGTPVLQLKESQINELVISLLSQGKLLIRDNDTLSVSTDVLVNTYRKLR.

A CoV Nsp1 globular domain is found at 25 to 149 (HQDHVSLTVP…KQNILLRKYG (125 aa)). Residues 165-193 (TSCPEWMDDFEADPKGKYAQNLLKKLIGG) enclose the BetaCoV Nsp1 C-terminal domain. One can recognise a CoV Nsp2 N-terminal domain in the interval 195-475 (VTPVDQYMCG…WNKVTQIANM (281 aa)). Positions 338, 341, 357, 359, 383, 386, 400, and 436 each coordinate Zn(2+). The interval 338 to 359 (CGSCGNDSWLTGNAIQGFACGC) is C4. The tract at residues 383–436 (CATCPFAKGDSCSSNCKHSVAQLVSYLSERCNVIADSKSFTLIFGGVAYAYFGC) is C2HC. Residues 481–715 (QHSLNFVGEF…LDLLNKGMQL (235 aa)) enclose the CoV Nsp2 middle domain. Residues 717-853 (HTKVSWAGSN…VPTLFRLKGG (137 aa)) enclose the CoV Nsp2 C-terminal domain. Residues 857-966 (KKVAFGGDQV…MIFSLHPVEC (110 aa)) enclose the Ubiquitin-like 1 domain. Macro domains follow at residues 1110 to 1276 (PLSN…IVDI) and 1278 to 1404 (QSLT…VKLN). A DPUP domain is found at 1404–1477 (NPSEDFIKHV…LSACRAYLDS (74 aa)). One can recognise a Ubiquitin-like 2 domain in the interval 1482 to 1537 (QLTIEVLVTVDGVNFRTVVLNNKNTYRSQLGCVFFNGADISDTIPDEKQNGHSLYL). Positions 1552–1823 (LYGPVDPTFL…RTEVDPDLSA (272 aa)) constitute a Peptidase C16 domain. The active-site For PL-PRO activity is the C1592. Residues C1672, C1675, C1707, and C1709 each coordinate Zn(2+). A C4-type zinc finger spans residues 1672-1709 (CNVCGIKDVVLQGLKACCYVGVQTVEDLRARMTYVCQC). Catalysis depends on for PL-PRO activity residues H1759 and D1774. Residues 1837 to 1954 (PVTYSPATIL…QIFDVAPIEL (118 aa)) enclose the Nucleic acid-binding domain. The G2M domain occupies 1967–2088 (PVEPPTVDVV…ATRTFTATTA (122 aa)). The tract at residues 2040–2363 (SMLRLHTVES…NLLACLWLLR (324 aa)) is HD1. The next 2 helical transmembrane spans lie at 2105–2125 (GILT…LAYF) and 2177–2197 (LLLM…LYVF). Positions 2214 to 2280 (KKFYKEVRAY…LKMVQTHLSH (67 aa)) constitute a 3Ecto domain. 2 disulfide bridges follow: C2230-C2258 and C2248-C2255. A run of 3 helical transmembrane segments spans residues 2281–2301 (YVLN…YMLY), 2305–2325 (FNWL…SIFV), and 2330–2350 (YNYA…AGLV). The interval 2364-2454 (KFYQHVINGC…ALRRPINATD (91 aa)) is Y1. Residues 2364–2737 (KFYQHVINGC…LSVRFTANKI (374 aa)) form the CoV Nsp3 Y domain. Residues H2368, C2373, C2378, C2381, C2414, H2417, C2421, and C2424 each contribute to the Zn(2+) site. The segment at 2368-2381 (HVINGCKDTACLLC) is ZF1. The segment at 2414 to 2424 (CRRHNWNCVDC) is ZF2. The interval 2455–2553 (RSHYYVDSVT…LVDSSLVTSV (99 aa)) is Y2. The tract at residues 2455–2737 (RSHYYVDSVT…LSVRFTANKI (283 aa)) is coV-Y. The interval 2554 to 2636 (GDSSEIATKM…DSVQYAHKHD (83 aa)) is Y3. Residues 2637–2737 (IQITNESYNN…LSVRFTANKI (101 aa)) form a Y4 region. 5 helical membrane-spanning segments follow: residues 2757–2777 (VLAT…LPTF), 3028–3048 (TTSL…FYYI), 3062–3082 (AVIA…VASI), 3104–3124 (PAFI…PIWM), and 3125–3145 (TCVY…AYFS). Positions 2761–3171 (IIVFLCAVLM…QDAASNIFVI (411 aa)) are HD2. The Nsp4C domain maps to 3151-3247 (VFTDGKLNCS…NCSITSGVLQ (97 aa)). Positions 3248 to 3553 (SGLVKMSHPS…NMQIMGVVMQ (306 aa)) constitute a Peptidase C30 domain. Catalysis depends on for 3CL-PRO activity residues H3288 and C3395. 7 helical membrane-spanning segments follow: residues 3559-3579 (VTYG…VIIL), 3593-3613 (TIPT…MLLV), 3618-3638 (TFLT…NIVY), 3664-3684 (TTHT…IVVK), 3691-3711 (LSNF…YSIG), 3740-3760 (LAKV…LVFP), and 3765-3785 (ILLL…VFSL). Residues 3571 to 3785 (LVSTYVIILQ…CTCYFGVFSL (215 aa)) form an HD3 region. A RdRp Nsp7 cofactor domain is found at 3846 to 3928 (SKLTDLKCTS…DIFDTPSVLQ (83 aa)). One can recognise a RdRp Nsp8 cofactor domain in the interval 3929–4127 (ATLSEFSHLA…RASTSAVKLQ (199 aa)). Residues 4128–4237 (NNEIKPSGLK…GHIAATVRLQ (110 aa)) form the Nsp9 ssRNA-binding domain. Positions 4238–4377 (AGSNTEFASN…DSLRQAALPQ (140 aa)) constitute an ExoN/MTase coactivator domain. Residues C4311, C4314, H4320, C4327, C4354, C4357, C4365, and C4367 each coordinate Zn(2+). Zinc fingers lie at residues 4311 to 4327 (CLYC…SGVC) and 4354 to 4367 (CNVC…GCNC). The NiRAN domain maps to 4383–4639 (FLKRVRGSIV…AAETHRDCDF (257 aa)). 2 residues coordinate Mn(2+): N4587 and D4596. Positions 4644–4742 (IEWPLTEYDF…MNMDVSLHRH (99 aa)) constitute a Nsp12 Interface domain. The Zn(2+) site is built by H4673, C4679, C4684, C4688, and C4865. Residues 4743–5310 (RLSLKELMMY…DLYSSPTTLQ (568 aa)) form the Nsp12 RNA-dependent RNA polymerase domain. The rdRp Fingers N-ter stretch occupies residues 4745-4959 (SLKELMMYAA…HQKMLKSMAA (215 aa)). The interval 4960–4998 (TRGATCVIGTTKFYGGWDFMLKTLYKDVDNPHLMGWDYP) is rdRp Palm N-ter. A RdRp catalytic domain is found at 4990–5152 (PHLMGWDYPK…CYNSDYAAKG (163 aa)). The interval 4999–5057 (KCDRAMPNMCRIFASLILARKHGTCCTTRDRFYRLANECAQVLSEYVLCGGGYYVKPGG) is rdRp Fingers C-ter. Zn(2+)-binding residues include H5020, C5023, and C5024. Residues 5058–5193 (TSSGDATTAY…KKGPHEFCSQ (136 aa)) form a rdRp Palm C-ter region. Residues S5137, D5138, and D5139 contribute to the active site. The tract at residues 5194–5310 (HTLYIKDGDD…DLYSSPTTLQ (117 aa)) is rdRp Thumb. The CV ZBD domain occupies 5311-5423 (AVGSCVVCHS…VEFNRLATCD (113 aa)). Residues C5315, C5318, C5326, C5329, C5336, C5339, H5343, H5349, C5360, C5365, C5382, and H5385 each coordinate Zn(2+). ATP is bound at residue 5592 to 5599 (GPPGTGKS). In terms of domain architecture, ExoN spans 5980-6195 (LFITREEAVR…RCLAIHSCFI (216 aa)). Active-site residues include D5998, E6000, and E6099. Residues C6115, C6118, C6134, H6137, H6165, C6169, and H6172 each coordinate Zn(2+). Active-site residues include H6176 and D6181. A Zn(2+)-binding site is contributed by C6187. The N7-MTase domain occupies 6204-6432 (YPYISHEKKL…NLWSTFTKVQ (229 aa)). 6239–6245 (DIGNPKG) serves as a coordination point for S-adenosyl-L-methionine. A gpppA-binding region spans residues 6318-6332 (CDGGSLYVNKHAFHT). Zn(2+)-binding residues include C6356, C6378, C6389, and H6392. Residues 6433-6493 (GLENIAFNFV…NIAFELYAKR (61 aa)) form the Nsp15 N-terminal oligomerization domain. Positions 6494–6616 (AVRSHPDFKL…LYKKVNNEFI (123 aa)) constitute an AV-Nsp11N/CoV-Nsp15M domain. In terms of domain architecture, NendoU spans 6633–6772 (LPLSDMEKDF…KDGQVQTFYP (140 aa)). Catalysis depends on residues H6663, H6678, K6718, K6821, D6905, K6945, and E6978. A Nidovirus-type SAM-dependent 2'-O-MTase domain is found at 6777–7071 (SADWKPGHAM…TLSVSTDVLV (295 aa)).

Belongs to the coronaviruses polyprotein 1ab family. Interacts with host PHB and PHB2. As to quaternary structure, interacts with papain-like protease nsp3 and non-structural protein 6. In terms of assembly, monomer. Homodimer. Only the homodimer shows catalytic activity. Interacts with nsp8 and nsp12 to form the replication-transcription complex (RTC): nsp12, nsp7, two subunits of nsp8, and up to two subunits of nsp13. As to quaternary structure, interacts with nsp7, nsp13 and nsp12 to form the replication-transcription complex (RTC): nsp12, nsp7, two subunits of nsp8, and up to two subunits of nsp13. In terms of assembly, interacts with nsp12. Interacts with proofreading exoribonuclease nsp14 and 2'-O-methyltransferase nsp16; these interactions enhance nsp14 and nsp16 enzymatic activities. As to quaternary structure, interacts with nsp7 and nsp8 to form the replication-transcription complex (RTC): nsp12, nsp7, two subunits of nsp8, and up to two subunits of nsp13. Interacts with nsp9. In terms of assembly, interacts with nsp8 to form the replication-transcription complex (RTC): nsp12, nsp7, two subunits of nsp8, and up to two subunits of nsp13. Mn(2+) is required as a cofactor. The cofactor is Mg(2+). In terms of processing, specific enzymatic cleavages in vivo by its own proteases yield mature proteins. 3CL-PRO and PL-PRO proteinases are autocatalytically processed.

It is found in the host membrane. Its subcellular location is the host cytoplasm. The protein resides in the host perinuclear region. The protein localises to the host endoplasmic reticulum-Golgi intermediate compartment. It catalyses the reaction RNA(n) + a ribonucleoside 5'-triphosphate = RNA(n+1) + diphosphate. The enzyme catalyses ATP + H2O = ADP + phosphate + H(+). The catalysed reaction is Thiol-dependent hydrolysis of ester, thioester, amide, peptide and isopeptide bonds formed by the C-terminal Gly of ubiquitin (a 76-residue protein attached to proteins as an intracellular targeting signal).. It carries out the reaction a 5'-end (N(7)-methyl 5'-triphosphoguanosine)-ribonucleoside in mRNA + S-adenosyl-L-methionine = a 5'-end (N(7)-methyl 5'-triphosphoguanosine)-(2'-O-methyl-ribonucleoside) in mRNA + S-adenosyl-L-homocysteine + H(+). It catalyses the reaction uridylyl-uridylyl-ribonucleotide-RNA = a 3'-end uridylyl-2',3'-cyclophospho-uridine-RNA + a 5'-end dephospho-ribonucleoside-RNA. The enzyme catalyses a 5'-end diphospho-ribonucleoside in mRNA + GTP + H(+) = a 5'-end (5'-triphosphoguanosine)-ribonucleoside in mRNA + diphosphate. The catalysed reaction is a 5'-end (5'-triphosphoguanosine)-ribonucleoside in mRNA + S-adenosyl-L-methionine = a 5'-end (N(7)-methyl 5'-triphosphoguanosine)-ribonucleoside in mRNA + S-adenosyl-L-homocysteine. In terms of biological role, the replicase polyprotein of coronaviruses is a multifunctional protein: it contains the activities necessary for the transcription of negative stranded RNA, leader RNA, subgenomic mRNAs and progeny virion RNA as well as proteinases responsible for the cleavage of the polyprotein into functional products. Promotes the degradation of host mRNAs by inducing an endonucleolytic RNA cleavage in template mRNAs, and inhibits of host mRNA translation, a function that is separable from its RNA cleavage activity. By suppressing host gene expression, nsp1 facilitates efficient viral gene expression in infected cells and evasion from host immune response. Its function is as follows. May play a role in the modulation of host cell survival signaling pathway by interacting with host PHB and PHB2. Indeed, these two proteins play a role in maintaining the functional integrity of the mitochondria and protecting cells from various stresses. Functionally, responsible for the cleavages located at the N-terminus of the replicase polyprotein. In addition, PL-PRO possesses a deubiquitinating/deISGylating activity and processes both 'Lys-48'- and 'Lys-63'-linked polyubiquitin chains from cellular substrates. Participates, together with nsp4, in the assembly of virally induced cytoplasmic double-membrane vesicles necessary for viral replication. Antagonizes innate immune induction of type I interferon by blocking the phosphorylation, dimerization and subsequent nuclear translocation of host IRF3. Also prevents host NF-kappa-B. signaling. In terms of biological role, participates in the assembly of virally-induced cytoplasmic double-membrane vesicles necessary for viral replication. Cleaves the C-terminus of replicase polyprotein at 11 sites. Recognizes substrates containing the core sequence [ILMVF]-Q-|-[SGACN]. May cleave human NLRP1 in lung epithelial cells, thereby activating the NLRP1 inflammasome pathway. Also able to bind an ADP-ribose-1''-phosphate (ADRP). Its function is as follows. Plays a role in the initial induction of autophagosomes from host endoplasmic reticulum. Later, limits the expansion of these phagosomes that are no longer able to deliver viral components to lysosomes. Functionally, forms a hexadecamer with nsp8 (8 subunits of each) that may participate in viral replication by acting as a primase. Alternatively, may synthesize substantially longer products than oligonucleotide primers. In terms of biological role, forms a hexadecamer with nsp7 (8 subunits of each) that may participate in viral replication by acting as a primase. Alternatively, may synthesize substantially longer products than oligonucleotide primers. Forms a primer, NSP9-pU, which is utilized by the polymerase for the initiation of RNA chains. Interacts with ribosome signal recognition particle RNA (SRP). Together with NSP8, suppress protein integration into the cell membrane, thereby disrupting host immune defenses. Its function is as follows. Plays a pivotal role in viral transcription by stimulating both nsp14 3'-5' exoribonuclease and nsp16 2'-O-methyltransferase activities. Therefore plays an essential role in viral mRNAs cap methylation. Functionally, RNA-directed RNA polymerase that catalyzes the transcription of viral genomic and subgenomic RNAs. Acts in complex with nsp7 and nsp8 to transcribe both the minus and positive strands of genomic RNA. The kinase-like NiRAN domain of NSP12 attaches one or more nucleotides to the amino terminus of NSP9, forming a covalent RNA-protein intermediate that serves as transcription/replication primer. Subgenomic RNAs (sgRNAs) are formed by discontinuous transcription: The polymerase has the ability to pause at transcription-regulating sequences (TRS) and jump to the leader TRS, resulting in a major deletion. This creates a series of subgenomic RNAs that are replicated, transcribed and translated. In addition, Nsp12 is a subunit of the viral RNA capping enzyme that catalyzes the RNA guanylyltransferase reaction for genomic and sub-genomic RNAs. Subsequently, the NiRAN domain transfers RNA to GDP, and forms the core cap structure GpppA-RNA. In terms of biological role, multi-functional protein with a zinc-binding domain in N-terminus displaying RNA and DNA duplex-unwinding activities with 5' to 3' polarity. Activity of helicase is dependent on magnesium. Plays a role in viral RNA synthesis through two distinct activities: an N7-guanine methyltransferase activity involved in the formation of the cap structure GpppA-RNA; a proofreading exoribonuclease for RNA replication that reduces the sensitivity of the virus to RNA mutagens. This activity acts on both ssRNA and dsRNA in a 3'-5' direction. Its function is as follows. Plays a role in viral transcription/replication and prevents the simultaneous activation of host cell dsRNA sensors, such as MDA5/IFIH1, OAS, and PKR. Acts by degrading the 5'-polyuridines generated during replication of the poly(A) region of viral genomic and subgenomic RNAs. Catalyzes a two-step reaction in which a 2'3'-cyclic phosphate (2'3'-cP) is first generated by 2'-O transesterification, which is then hydrolyzed to a 3'-phosphate (3'-P). If not degraded, poly(U) RNA would hybridize with poly(A) RNA tails and activate host dsRNA sensors. Functionally, methyltransferase that mediates mRNA cap 2'-O-ribose methylation to the 5'-cap structure of viral mRNAs. N7-methyl guanosine cap is a prerequisite for binding of nsp16. Therefore plays an essential role in viral mRNAs cap methylation which is essential to evade immune system. The chain is Replicase polyprotein 1ab (rep) from Camelus dromedarius (Dromedary).